The following is a 2219-amino-acid chain: E3 ubiquitin-protein ligase Ubr3 (2219 aa).

2 disordered regions span residues 1-48 and 78-134; these read MDED…DLSS and AAGA…SALS. The segment covering 20–29 has biased composition (basic and acidic residues); it reads VREQTHHPPM. Over residues 31–42 the composition is skewed to acidic residues; sequence EDQELDNEDGSS. The span at 114–134 shows a compositional bias: low complexity; it reads GPTTTTSSGTAAESGAASALS. The UBR-type zinc-finger motif lies at 222–293; the sequence is AKCGLVWVPH…AEGFCSDHGI (72 aa). Disordered regions lie at residues 1348–1367 and 1440–1464; these read SFSL…TMDV and QREK…KARE. Positions 1353-1367 are enriched in acidic residues; sequence DGEDQSSDDDSTMDV. Residues 1607–1643 form an RING-type; degenerate zinc finger; it reads CGHHVHLSCLEAYLKTLYTTQRQPVQDRGEFYCPVCR. 2 disordered regions span residues 1872–1902 and 1935–1954; these read VGSD…QQQQ and SAAA…HGAS. The segment covering 1877-1888 has biased composition (low complexity); sequence SAAESQQQESAA.

This sequence belongs to the E3 ubiquitin-protein ligase UBR1-like family. Selectively interacts (via UBR-type zinc finger) with the cleaved form of Diap1; this interaction is enhanced by tal. Interacts with tal and Rrp1. Interacts with ovo isoform B (via N-terminus). Interacts with Cad99C (via the cytoplasmic domain). Interacts with ck and Sans. Interacts with cos (via Kinesin motor domain). Post-translationally, in vitro, self-ubiquitination in the presence of E1, E2 and ubiquitin.

It is found in the cytoplasm. The protein resides in the nucleus. It carries out the reaction S-ubiquitinyl-[E2 ubiquitin-conjugating enzyme]-L-cysteine + [acceptor protein]-L-lysine = [E2 ubiquitin-conjugating enzyme]-L-cysteine + N(6)-ubiquitinyl-[acceptor protein]-L-lysine.. It functions in the pathway protein modification; protein ubiquitination. E3 ubiquitin-protein ligase which is a component of the N-end rule pathway. Recognizes and binds to proteins bearing specific N-terminal residues, leading to their ubiquitination and subsequent degradation. Binds to the E3 ubiquitin-protein ligase Diap1 and enhances its ubiquitination and anti-apoptotic functions. Essential during trichome development for the ubiquitination of the N-terminus of ovo isoform B (svb), converting it from a transcriptional inhibitor to an activator. Positively regulates a hh-signaling pathway which functions in photoreceptor differentiation. Activation of hh up-regulates transcription of Ubr3, which in turn promotes hh signaling by mediating the ubiquitination and degradation of cos. Necessary for auditory transduction: plays a role in Johnston's organ organization by acting in the regulation of zip and ck function in scolopidial apical attachment. Likely to function by acting in a pathway that negatively regulates the ubiquitination of zip, consequently affecting its interaction with ck. May also negatively regulate a component of the SCF (SKP1-CUL1-F-box protein) E3 ubiquitin-protein ligase complex Cul1, which also appears to function in the negative regulation of the zip-ck interaction and scolopidial apical attachment. This Drosophila melanogaster (Fruit fly) protein is E3 ubiquitin-protein ligase Ubr3.